A 116-amino-acid chain; its full sequence is Large ribosomal subunit protein bL19 (116 aa).

Belongs to the bacterial ribosomal protein bL19 family.

In terms of biological role, this protein is located at the 30S-50S ribosomal subunit interface and may play a role in the structure and function of the aminoacyl-tRNA binding site. The sequence is that of Large ribosomal subunit protein bL19 from Roseiflexus castenholzii (strain DSM 13941 / HLO8).